We begin with the raw amino-acid sequence, 185 residues long: MISVNDFRTGLTIEVDGEIWRVLEFQHVKPGKGAAFVRSKLRNLRTGAIQERTFRAGEKVNRAQIDTRKMQYLYANGDQHVFMDMETYEQIELPAKQIEHELKFLKENMEVFIMMYQGETIGVELPNTVELKVVETEPGIKGDTASGGSKPAKLETGLVVQVPFFVNEGDTLIINTADGTYVSRA.

It belongs to the elongation factor P family.

The protein localises to the cytoplasm. The protein operates within protein biosynthesis; polypeptide chain elongation. Functionally, involved in peptide bond synthesis. Stimulates efficient translation and peptide-bond synthesis on native or reconstituted 70S ribosomes in vitro. Probably functions indirectly by altering the affinity of the ribosome for aminoacyl-tRNA, thus increasing their reactivity as acceptors for peptidyl transferase. The protein is Elongation factor P of Geobacillus kaustophilus (strain HTA426).